A 207-amino-acid chain; its full sequence is Outer-membrane lipoprotein carrier protein (207 aa).

A signal peptide spans M1–A21.

This sequence belongs to the LolA family. Monomer.

Its subcellular location is the periplasm. Participates in the translocation of lipoproteins from the inner membrane to the outer membrane. Only forms a complex with a lipoprotein if the residue after the N-terminal Cys is not an aspartate (The Asp acts as a targeting signal to indicate that the lipoprotein should stay in the inner membrane). In Pseudomonas syringae pv. tomato (strain ATCC BAA-871 / DC3000), this protein is Outer-membrane lipoprotein carrier protein.